Consider the following 513-residue polypeptide: Protein indeterminate-domain 11 (513 aa).

The tract at residues Met-1 to Glu-84 is disordered. The segment covering Gln-10 to Asn-45 has biased composition (polar residues). Low complexity predominate over residues Gln-51–Gln-60. The residue at position 89 (Ser-89) is a Phosphoserine. 2 C2H2-type zinc fingers span residues Phe-99 to His-121 and Tyr-141 to His-171. The Nuclear localization signal signature appears at Ile-163–Lys-170. The C2H2-type 2; degenerate zinc-finger motif lies at Trp-176 to Gly-199. Zn(2+) contacts are provided by Cys-178, Cys-181, His-194, Cys-198, Cys-205, Cys-207, His-220, and Cys-224. The CCHC-type 2; atypical zinc-finger motif lies at Tyr-203–Ala-226. An SHR-binding region spans residues Arg-213 to Glu-225. Disordered regions lie at residues Ala-255–His-280 and Pro-334–Ser-358. The span at Thr-264–His-280 shows a compositional bias: low complexity.

Its subcellular location is the nucleus. Its function is as follows. Probable transcription factor. The chain is Protein indeterminate-domain 11 from Arabidopsis thaliana (Mouse-ear cress).